A 42-amino-acid polypeptide reads, in one-letter code: Photosystem I reaction center subunit IX (42 aa).

The chain crosses the membrane as a helical span at residues 7-27; it reads YLSTAPVLATLWFGFLAGLLI.

This sequence belongs to the PsaJ family.

It is found in the plastid. Its subcellular location is the chloroplast thylakoid membrane. In terms of biological role, may help in the organization of the PsaE and PsaF subunits. The protein is Photosystem I reaction center subunit IX of Marchantia polymorpha (Common liverwort).